The sequence spans 285 residues: MSSFCLSKHLILVPILVMMAQLLLIRNVLSLNMNNPYLYHKCSANQGEYKLGSLYKKSLDSGIQQLSKDNEVFRGGFVYMDHTDPNGTLRVYITFQCRGDIYGSHCRSCFATARAELFKRCPRDKAAIIWYDQCFLEFSSISTGGKINYDDNICIDTARARPNAKTHTGDDSVLEFLRLFENLTNIAVTKRNNFVKDVEKPALYAAGEKRFGNKKIYVMVQCTHDLTPRACVECVNHNVRQFQDCYEDKPVGLKKGARVLGRSCNFRFERYPFVNAKTSPNYLKF.

An N-terminal signal peptide occupies residues Met1–Ser30. 2 Gnk2-homologous domains span residues Tyr37–Thr143 and Arg161–Phe273.

Belongs to the cysteine-rich repeat secretory protein family.

It localises to the secreted. This Arabidopsis thaliana (Mouse-ear cress) protein is Putative cysteine-rich repeat secretory protein 14 (CRRSP14).